The following is a 374-amino-acid chain: Alcohol dehydrogenase 3, mitochondrial (374 aa).

Residues 1-26 constitute a mitochondrion transit peptide; it reads MLRLTSARSIVSPLRKGAFGSIRTLA. 7 residues coordinate Zn(2+): C70, H93, C124, C127, C130, C138, and C180. Residues 204–210, D228, K233, 295–297, and R367 each bind NAD(+); these read GAAGGLG and VGL.

The protein belongs to the zinc-containing alcohol dehydrogenase family. Homotetramer. Requires Zn(2+) as cofactor.

It localises to the mitochondrion matrix. It catalyses the reaction a primary alcohol + NAD(+) = an aldehyde + NADH + H(+). The enzyme catalyses a secondary alcohol + NAD(+) = a ketone + NADH + H(+). The sequence is that of Alcohol dehydrogenase 3, mitochondrial (ADH3) from Kluyveromyces lactis (strain ATCC 8585 / CBS 2359 / DSM 70799 / NBRC 1267 / NRRL Y-1140 / WM37) (Yeast).